A 142-amino-acid polypeptide reads, in one-letter code: Phosphoribosyl-AMP cyclohydrolase (142 aa).

Aspartate 92 contacts Mg(2+). Cysteine 93 is a binding site for Zn(2+). Mg(2+)-binding residues include aspartate 94 and aspartate 96. Positions 109 and 116 each coordinate Zn(2+).

It belongs to the PRA-CH family. In terms of assembly, homodimer. Requires Mg(2+) as cofactor. Zn(2+) serves as cofactor.

The protein localises to the cytoplasm. It carries out the reaction 1-(5-phospho-beta-D-ribosyl)-5'-AMP + H2O = 1-(5-phospho-beta-D-ribosyl)-5-[(5-phospho-beta-D-ribosylamino)methylideneamino]imidazole-4-carboxamide. It functions in the pathway amino-acid biosynthesis; L-histidine biosynthesis; L-histidine from 5-phospho-alpha-D-ribose 1-diphosphate: step 3/9. Its function is as follows. Catalyzes the hydrolysis of the adenine ring of phosphoribosyl-AMP. The polypeptide is Phosphoribosyl-AMP cyclohydrolase (Alcanivorax borkumensis (strain ATCC 700651 / DSM 11573 / NCIMB 13689 / SK2)).